The sequence spans 226 residues: MIQYLNVFFYDIYPYICATVFFLGSWLRYDYGQYTWRASSSQMLDKRGMVIWSNLFHIGILGIFFGHLFGMLTPHWMYAWFLPVAAKQLMAMVLGGICGVLTLIGGAGLLWRRLTNQRVRATSTTPDIIIMSILLIQCLLGLSTIPFSAQYPDGSEMMKLVGWAQSIVTFRGGSSEMLNGVAFVFRLHLVLGMTIFLLFPFTRLVHVWSAPFEYFTRRYQIVRSRR.

Residues 1–4 are Periplasmic-facing; the sequence is MIQY. The chain crosses the membrane as a helical span at residues 5–30; sequence LNVFFYDIYPYICATVFFLGSWLRYD. Residues 31 to 48 lie on the Cytoplasmic side of the membrane; it reads YGQYTWRASSSQMLDKRG. A helical transmembrane segment spans residues 49-71; the sequence is MVIWSNLFHIGILGIFFGHLFGM. His57 and His67 together coordinate heme b. The Periplasmic portion of the chain corresponds to 72–83; sequence LTPHWMYAWFLP. Residues 84 to 113 form a helical membrane-spanning segment; the sequence is VAAKQLMAMVLGGICGVLTLIGGAGLLWRR. At 114–125 the chain is on the cytoplasmic side; it reads LTNQRVRATSTT. A helical membrane pass occupies residues 126-149; it reads PDIIIMSILLIQCLLGLSTIPFSA. At 150–183 the chain is on the periplasmic side; it reads QYPDGSEMMKLVGWAQSIVTFRGGSSEMLNGVAF. Residues 184–199 traverse the membrane as a helical segment; that stretch reads VFRLHLVLGMTIFLLF. The heme b site is built by His188 and His206. Over 200–226 the chain is Cytoplasmic; sequence PFTRLVHVWSAPFEYFTRRYQIVRSRR.

Dimer of heterotrimers each composed of an alpha, a beta and a gamma chain. Alpha and beta are catalytic chains; gamma chains are involved in binding the enzyme complex to the cytoplasmic membrane. Requires heme as cofactor.

It localises to the cell inner membrane. It carries out the reaction nitrate + a quinol = a quinone + nitrite + H2O. Its function is as follows. This is a second nitrate reductase enzyme which can substitute for the NRA enzyme and allows E.coli to use nitrate as an electron acceptor during anaerobic growth. The gamma chain is a membrane-embedded heme-iron unit resembling cytochrome b, which transfers electrons from quinones to the beta subunit. In Escherichia coli (strain K12), this protein is Respiratory nitrate reductase 2 gamma chain (narV).